The sequence spans 265 residues: Ribosomal RNA small subunit methyltransferase A (265 aa).

Residues His17, Leu19, Gly44, Glu65, Asp90, and Asn112 each coordinate S-adenosyl-L-methionine.

It belongs to the class I-like SAM-binding methyltransferase superfamily. rRNA adenine N(6)-methyltransferase family. RsmA subfamily.

It is found in the cytoplasm. The enzyme catalyses adenosine(1518)/adenosine(1519) in 16S rRNA + 4 S-adenosyl-L-methionine = N(6)-dimethyladenosine(1518)/N(6)-dimethyladenosine(1519) in 16S rRNA + 4 S-adenosyl-L-homocysteine + 4 H(+). Functionally, specifically dimethylates two adjacent adenosines (A1518 and A1519) in the loop of a conserved hairpin near the 3'-end of 16S rRNA in the 30S particle. May play a critical role in biogenesis of 30S subunits. The protein is Ribosomal RNA small subunit methyltransferase A of Xylella fastidiosa (strain 9a5c).